A 174-amino-acid polypeptide reads, in one-letter code: uncharacterized protein (174 aa).

Residues 7-24 (LLLLAFAVCLAVGFSGCL) traverse the membrane as a helical segment.

It is found in the membrane. This is an uncharacterized protein from Methanocaldococcus jannaschii (strain ATCC 43067 / DSM 2661 / JAL-1 / JCM 10045 / NBRC 100440) (Methanococcus jannaschii).